A 225-amino-acid chain; its full sequence is NAD(P)H-quinone oxidoreductase subunit K, chloroplastic (225 aa).

Positions 43, 44, 108, and 139 each coordinate [4Fe-4S] cluster.

The protein belongs to the complex I 20 kDa subunit family. NDH is composed of at least 16 different subunits, 5 of which are encoded in the nucleus. The cofactor is [4Fe-4S] cluster.

The protein resides in the plastid. It localises to the chloroplast thylakoid membrane. It carries out the reaction a plastoquinone + NADH + (n+1) H(+)(in) = a plastoquinol + NAD(+) + n H(+)(out). The catalysed reaction is a plastoquinone + NADPH + (n+1) H(+)(in) = a plastoquinol + NADP(+) + n H(+)(out). In terms of biological role, NDH shuttles electrons from NAD(P)H:plastoquinone, via FMN and iron-sulfur (Fe-S) centers, to quinones in the photosynthetic chain and possibly in a chloroplast respiratory chain. The immediate electron acceptor for the enzyme in this species is believed to be plastoquinone. Couples the redox reaction to proton translocation, and thus conserves the redox energy in a proton gradient. The sequence is that of NAD(P)H-quinone oxidoreductase subunit K, chloroplastic from Daucus carota (Wild carrot).